The primary structure comprises 227 residues: Probable maleylacetoacetate isomerase 2 (227 aa).

A GST N-terminal domain is found at 14-97 (IQPILYSYWR…YLEETRPQRP (84 aa)). Glutathione contacts are provided by residues 24-29 (SSCSWR), Gln55, Val69, 81-82 (ES), Gln121, and 125-127 (NLI). In terms of domain architecture, GST C-terminal spans 102-222 (DVHKRAKVRE…HPSNQPDCPP (121 aa)).

The protein belongs to the GST superfamily. Zeta family. It depends on glutathione as a cofactor.

The protein resides in the cytoplasm. The catalysed reaction is 4-maleylacetoacetate = 4-fumarylacetoacetate. It carries out the reaction RX + glutathione = an S-substituted glutathione + a halide anion + H(+). It functions in the pathway amino-acid degradation; L-phenylalanine degradation; acetoacetate and fumarate from L-phenylalanine: step 5/6. Functionally, catalyzes the glutathione dependent oxygenation of dichloroacetic acid to glyoxylic acid in vitro. Has no glutathione thioltransferase activity with 4-hydroxynonenal (4-HNE), adrenochrome, phenethyl isothiocyanate (PEITC), 5-hydroperoxyeicosatetraenoic acid ((5S)-HpETE), prostaglandin A2 (PGA2) or 2-hydroxyethyldisulfide (HED). The polypeptide is Probable maleylacetoacetate isomerase 2 (GstZ2) (Drosophila melanogaster (Fruit fly)).